The chain runs to 256 residues: 4-oxalocrotonate decarboxylase (256 aa).

It belongs to the hydratase/decarboxylase family. Forms a complex with AmnF. Mg(2+) serves as cofactor. Requires Mn(2+) as cofactor.

It carries out the reaction (3E)-2-oxohex-3-enedioate + H(+) = 2-oxopent-4-enoate + CO2. Strongly inhibited by Fe(2+), Fe(3+), K(3)[Fe(CN)(6)], Ag(+) and Cu(2+). Involved in the modified meta-cleavage pathway for the 2-aminophenol catabolism. This Pseudomonas sp protein is 4-oxalocrotonate decarboxylase (amnE).